Reading from the N-terminus, the 283-residue chain is Demethylrebeccamycin-D-glucose O-methyltransferase (283 aa).

Residues serine 101, glutamine 106, 129-130 (DA), leucine 146, and histidine 151 contribute to the S-adenosyl-L-methionine site.

The protein belongs to the methyltransferase superfamily. Monomer.

It carries out the reaction 4'-demethylrebeccamycin + S-adenosyl-L-methionine = rebeccamycin + S-adenosyl-L-homocysteine + H(+). Its function is as follows. Glycosyl O-methyltransferase that catalyzes the final step in the biosynthesis of rebeccamycin, an indolocarbazole alkaloid that inhibits topoisomerase 1. Has broad substrate specificity and functions as glycosyl O-methyltransferase on a number of rebeccamycin analogs. In Lentzea aerocolonigenes (Lechevalieria aerocolonigenes), this protein is Demethylrebeccamycin-D-glucose O-methyltransferase (rebM).